The following is a 204-amino-acid chain: High frequency lysogenization protein HflD homolog (204 aa).

This sequence belongs to the HflD family.

The protein resides in the cytoplasm. The protein localises to the cell inner membrane. This Shewanella amazonensis (strain ATCC BAA-1098 / SB2B) protein is High frequency lysogenization protein HflD homolog.